Here is a 204-residue protein sequence, read N- to C-terminus: HTH-type transcriptional activator BcrR (204 aa).

Over 1–81 (MEFNEKLQQL…ETENRSNLKK (81 aa)) the chain is Cytoplasmic. Residues 7-61 (LQQLRTGKNLTQEQLAEQLYVSRTAISKWESGKGYPNMESLKCISKFFSVTIDEL) form the HTH cro/C1-type domain. Residues 18 to 37 (QEQLAEQLYVSRTAISKWES) constitute a DNA-binding region (H-T-H motif). A helical membrane pass occupies residues 82 to 102 (IYNYIYGILDMMAVAFIFLPL). Over 103 to 126 (YGNSVGGYVYAVNLLSFTATTPFN) the chain is Extracellular. Residues 127-147 (LAVYWSAFAALIIIGIGKIIS) traverse the membrane as a helical segment. At 148–154 (THLDKEK) the chain is on the cytoplasmic side. Residues 155-175 (WGGIATKCSLTITALAVCFFA) traverse the membrane as a helical segment. At 176-181 (AAREPY) the chain is on the extracellular side. Residues 182-202 (ITVLVFLLLIGKIFVWIKQMG) form a helical membrane-spanning segment. Residues 203–204 (MK) lie on the Cytoplasmic side of the membrane.

Its subcellular location is the cell membrane. With respect to regulation, constitutively bound to the bcrABD promoter. Requires bacitracin for activation, probably through a conformational change, such as the oligomerization of inactive dimers to form active tetramers. In terms of biological role, functions both as a membrane-bound sensor and a transducer of bacitracin availability to activate transcription of the bcrABD operon in the presence of bacitracin. Binds specifically to two inverted repeat sequences on the bcrABD promoter, irrespective of bacitracin concentration. The protein is HTH-type transcriptional activator BcrR of Enterococcus faecalis (Streptococcus faecalis).